A 467-amino-acid polypeptide reads, in one-letter code: Gamma-aminobutyric acid receptor subunit gamma-3 (467 aa).

The signal sequence occupies residues 1-17 (MAPKLLLLLCLFSGLHA). Residues 18–256 (RSRKVEEDEY…FELSRRMGYF (239 aa)) are Extracellular-facing. N110 is a glycosylation site (N-linked (GlcNAc...) asparagine). A disulfide bridge links C171 with C185. Residue N228 is glycosylated (N-linked (GlcNAc...) asparagine). A helical transmembrane segment spans residues 257 to 277 (TIQTYIPCILTVVLSWVSFWI). At 278-283 (KKDATP) the chain is on the cytoplasmic side. A helical transmembrane segment spans residues 284–303 (ARTALGITTVLTMTTLSTIA). Over 304–311 (RKSLPRVS) the chain is Extracellular. A helical membrane pass occupies residues 312–332 (YVTAMDLFVTVCFLFVFAALM). Residues 333–446 (EYATLNYYSS…DILELDSYSR (114 aa)) are Cytoplasmic-facing. Residues 447–467 (VFFPTSFLLFNLVYWVGYLYL) form a helical membrane-spanning segment.

Belongs to the ligand-gated ion channel (TC 1.A.9) family. Gamma-aminobutyric acid receptor (TC 1.A.9.5) subfamily. GABRG3 sub-subfamily. As to quaternary structure, heteropentamer, formed by a combination of alpha (GABRA1-6), beta (GABRB1-3), gamma (GABRG1-3), delta (GABRD), epsilon (GABRE), rho (GABRR1-3), pi (GABRP) and theta (GABRQ) chains, each subunit exhibiting distinct physiological and pharmacological properties. May be palmitoylated. As to expression, expressed in brain.

It localises to the postsynaptic cell membrane. It is found in the cell membrane. It carries out the reaction chloride(in) = chloride(out). Functionally, gamma subunit of the heteropentameric ligand-gated chloride channel gated by gamma-aminobutyric acid (GABA), a major inhibitory neurotransmitter in the brain. GABA-gated chloride channels, also named GABA(A) receptors (GABAAR), consist of five subunits arranged around a central pore and contain GABA active binding site(s) located at the alpha and beta subunit interface(s). When activated by GABA, GABAARs selectively allow the flow of chloride across the cell membrane down their electrochemical gradient. The polypeptide is Gamma-aminobutyric acid receptor subunit gamma-3 (Homo sapiens (Human)).